Consider the following 131-residue polypeptide: Profilin-1 (131 aa).

This sequence belongs to the profilin family. In terms of assembly, occurs in many kinds of cells as a complex with monomeric actin in a 1:1 ratio.

Its subcellular location is the cytoplasm. It is found in the cytoskeleton. Its function is as follows. Binds to actin and affects the structure of the cytoskeleton. At high concentrations, profilin prevents the polymerization of actin, whereas it enhances it at low concentrations. By binding to PIP2, it inhibits the formation of IP3 and DG. The polypeptide is Profilin-1 (Ambrosia artemisiifolia (Common ragweed)).